The following is a 185-amino-acid chain: Prenylated Rab acceptor protein 1 (185 aa).

The Cytoplasmic portion of the chain corresponds to 1–78; sequence MAAEKDQQKD…RNVEYYQSNY (78 aa). A required for interaction with prenylated RAB3A and VAMP2 region spans residues 30-54; it reads AGRERLERRRATIRPWSSFVDQRRF. The next 2 membrane-spanning stretches (helical) occupy residues 79–94 and 95–112; these read VFVF…VTSP and MLLV…ILYL. Residues 113–131 are Cytoplasmic-facing; it reads RTLQSKFVLFGREVSPAHQ. 2 helical membrane passes run 132–148 and 149–165; these read YALA…LAGA and GSAV…VIGS. The tract at residues 165–185 is required for interaction with GDI1; sequence SHAAFHQMEAVDGEELQMEPV. Topologically, residues 166–185 are cytoplasmic; the sequence is HAAFHQMEAVDGEELQMEPV. The required for interaction with prenylated RAB3A and VAMP2 stretch occupies residues 175 to 185; sequence VDGEELQMEPV. The interval 175–185 is homodimerization; that stretch reads VDGEELQMEPV.

Belongs to the PRA1 family. In terms of assembly, homodimer. Interacts with VAMP2 (synaptobrevin-2), prenylated Rab proteins, GDI1, NDRG1 and PCLO.

The protein resides in the cell membrane. It is found in the cytoplasm. The protein localises to the golgi apparatus. It localises to the cytoplasmic vesicle. Its subcellular location is the secretory vesicle. The protein resides in the synaptic vesicle. General Rab protein regulator required for vesicle formation from the Golgi complex. May control vesicle docking and fusion by mediating the action of Rab GTPases to the SNARE complexes. In addition it inhibits the removal of Rab GTPases from the membrane by GDI1. The sequence is that of Prenylated Rab acceptor protein 1 (RABAC1) from Canis lupus familiaris (Dog).